The following is a 364-amino-acid chain: Anhydro-N-acetylmuramic acid kinase (364 aa).

Residue 12-19 (GTSHDAID) participates in ATP binding.

It belongs to the anhydro-N-acetylmuramic acid kinase family.

It catalyses the reaction 1,6-anhydro-N-acetyl-beta-muramate + ATP + H2O = N-acetyl-D-muramate 6-phosphate + ADP + H(+). It functions in the pathway amino-sugar metabolism; 1,6-anhydro-N-acetylmuramate degradation. It participates in cell wall biogenesis; peptidoglycan recycling. Functionally, catalyzes the specific phosphorylation of 1,6-anhydro-N-acetylmuramic acid (anhMurNAc) with the simultaneous cleavage of the 1,6-anhydro ring, generating MurNAc-6-P. Is required for the utilization of anhMurNAc either imported from the medium or derived from its own cell wall murein, and thus plays a role in cell wall recycling. The sequence is that of Anhydro-N-acetylmuramic acid kinase from Gamma-proteobacterium EBAC31A08.